We begin with the raw amino-acid sequence, 471 residues long: MSVLKEYRTVSEVVGPLMIVDQVAGVHYNELVDITLHNGERRKGQVLEVQGDKAMVQLFEGSTGINLAKTKVRFTGHPLELAVSEDMVGRIFDGMGQPIDGGPELIPEKYLDIDGQAINPVARDYPDEFIQTGISAIDHLNTLVRGQKLPVFSGSGLPHNELAAQIARQATVLNSDDNFAVVFAAMGITFEEAEFFMNDLRETGAIDRSVLFINLANDPAIERIATPRIALTTAEYLAYEKGMHVLVIMTDMTNYCEALREVSAARREVPGRRGYPGYLYTNLSTLYERAGRLIGKKGSVTQIPILTMPEDDITHPIPDLTGYITEGQIILSQELYKNGFRPPINVLPSLSRLKDKGSGEGKTRQDHAATMNQLFAAYAQGKQAKELAVVLGESALSETDKLYVAFTNRFEEEYINQGFYTNRSIEESLDLGWELLSILPRTELKRIKDDMLDRYLPKADTTMTKVFVAND.

Belongs to the ATPase alpha/beta chains family.

Functionally, produces ATP from ADP in the presence of a proton gradient across the membrane. The V-type beta chain is a regulatory subunit. This chain is V-type ATP synthase beta chain, found in Streptococcus pyogenes serotype M12 (strain MGAS2096).